A 199-amino-acid chain; its full sequence is Protein MA_3591 (199 aa).

One can recognise an AMMECR1 domain in the interval 5–196 (TEGRVAVKLA…EKEPEGEVIE (192 aa)).

In Methanosarcina acetivorans (strain ATCC 35395 / DSM 2834 / JCM 12185 / C2A), this protein is Protein MA_3591.